We begin with the raw amino-acid sequence, 101 residues long: NADH-quinone oxidoreductase subunit K (101 aa).

The next 3 helical transmembrane spans lie at 4–24 (VGHY…GIFI), 29–49 (IIVI…NLVA), and 65–85 (FVLT…VIYF).

It belongs to the complex I subunit 4L family. As to quaternary structure, NDH-1 is composed of 14 different subunits. Subunits NuoA, H, J, K, L, M, N constitute the membrane sector of the complex.

The protein localises to the cell inner membrane. It catalyses the reaction a quinone + NADH + 5 H(+)(in) = a quinol + NAD(+) + 4 H(+)(out). Functionally, NDH-1 shuttles electrons from NADH, via FMN and iron-sulfur (Fe-S) centers, to quinones in the respiratory chain. The immediate electron acceptor for the enzyme in this species is believed to be ubiquinone. Couples the redox reaction to proton translocation (for every two electrons transferred, four hydrogen ions are translocated across the cytoplasmic membrane), and thus conserves the redox energy in a proton gradient. The chain is NADH-quinone oxidoreductase subunit K from Sphingopyxis alaskensis (strain DSM 13593 / LMG 18877 / RB2256) (Sphingomonas alaskensis).